Here is a 1143-residue protein sequence, read N- to C-terminus: Serine/threonine-protein kinase BRI1-like 2 (1143 aa).

A signal peptide spans 1–31 (MTTSPIRVRIRTRIQISFIFLLTHLSQSSSS). Residues 32 to 756 (DQSSLKTDSL…GTRAASWANS (725 aa)) are Extracellular-facing. Residues 68-75 (CQFSGVTC) carry the Cys pair 1 motif. LRR repeat units lie at residues 77 to 101 (GGRV…AFTS), 102 to 125 (LDSL…LLLL), 126 to 150 (PLTL…FFSK), 151 to 175 (YSNL…LFLS), 177 to 200 (KKLQ…TIPL), 203 to 227 (CVSM…LINC), 228 to 250 (TNLK…SFGE), 251 to 275 (LKLL…IGDT), 277 to 299 (RSLQ…SLSS), 300 to 324 (CSWL…ILRS), 326 to 349 (GSLQ…ISAC), 351 to 373 (SLRI…LCPG), 374 to 398 (AASL…ISQC), 399 to 422 (SELR…IGNL), 424 to 446 (KLEQ…IGKL), 447 to 470 (QNLK…FFNC), 472 to 493 (NIEW…DFGI), 494 to 518 (LSRL…LGKC), 520 to 542 (TLVW…LGRQ), 570 to 594 (VGGL…KSCD), 610 to 634 (YQTI…IGEM), 635 to 660 (IALQ…QLKN), 662 to 681 (GVFD…SFSN), and 682 to 707 (LSFL…QLST). Asparagine 84 and asparagine 118 each carry an N-linked (GlcNAc...) asparagine glycan. N-linked (GlcNAc...) asparagine glycosylation is found at asparagine 163, asparagine 188, asparagine 226, and asparagine 234. N-linked (GlcNAc...) asparagine glycosylation is found at asparagine 288 and asparagine 312. Residue asparagine 412 is glycosylated (N-linked (GlcNAc...) asparagine). Asparagine 469 is a glycosylation site (N-linked (GlcNAc...) asparagine). The N-linked (GlcNAc...) asparagine glycan is linked to asparagine 506. N-linked (GlcNAc...) asparagine glycosylation is present at asparagine 681. A Cys pair 2 motif is present at residues 720 to 727 (CGVPLPEC). The chain crosses the membrane as a helical span at residues 757–777 (IVLGVLISAASVCILIVWAIA). Residues 778–1143 (VRARRRDADD…NNSHSHSNSL (366 aa)) are Cytoplasmic-facing. A Phosphothreonine modification is found at threonine 835. The Protein kinase domain maps to 838–1129 (FSAASMIGHG…LQVVASLREL (292 aa)). Residues 844-852 (IGHGGFGEV) and lysine 866 contribute to the ATP site. Phosphotyrosine is present on tyrosine 911. Catalysis depends on aspartate 966, which acts as the Proton acceptor. Position 1001 is a phosphoserine (serine 1001). Tyrosine 1009 bears the Phosphotyrosine mark.

This sequence belongs to the protein kinase superfamily. Ser/Thr protein kinase family. In terms of assembly, interacts with TTL3. Expressed in provascular and procambial sites throughout plant development. Expressed throughout globe- to heart-staged embryos. Then, it is restricted to procambial cells by the late torpedo stage, and this pattern persists throughout the duration of embryo development. After germination, it is expressed not only in procambial cells throughout the plant but also in all lateral organ primordia before the onset of vascularization.

It localises to the cell membrane. It carries out the reaction L-seryl-[protein] + ATP = O-phospho-L-seryl-[protein] + ADP + H(+). It catalyses the reaction L-threonyl-[protein] + ATP = O-phospho-L-threonyl-[protein] + ADP + H(+). Receptor with a serine/threonine-protein kinase activity, which may transduce extracellular spatial and temporal signals into downstream cell differentiation responses in provascular and procambial cells. In contrast to BRI1, BRL1 and BRL3, it does not bind brassinolide. The polypeptide is Serine/threonine-protein kinase BRI1-like 2 (Arabidopsis thaliana (Mouse-ear cress)).